The chain runs to 214 residues: Killer cell lectin-like receptor subfamily B member 1 (214 aa).

The Cytoplasmic segment spans residues 1 to 42; sequence MDAPVLYAELNLAETRGLRCTSAPSLPQDACQGPGWHRVALK. A helical; Signal-anchor for type II membrane protein membrane pass occupies residues 43–63; the sequence is LGCAGLIFLLMVLSVLVGFLV. The Extracellular segment spans residues 64–214; the sequence is QKPLIEKCSV…WICQKTLKHV (151 aa). The C-type lectin domain maps to 98–208; that stretch reads HCDKCLFTSQ…CSSDNHWICQ (111 aa). Disulfide bonds link Cys-119-Cys-207 and Cys-186-Cys-199.

It localises to the membrane. This chain is Killer cell lectin-like receptor subfamily B member 1 (Klrb1), found in Mus musculus (Mouse).